The sequence spans 870 residues: DNA-directed RNA polymerase subunit Rpo1N (870 aa).

Residues C60, C63, C70, H73, C100, C103, C146, and C149 each coordinate Zn(2+). D451, D453, and D455 together coordinate Mg(2+).

Belongs to the RNA polymerase beta' chain family. In terms of assembly, part of the RNA polymerase complex. Requires Mg(2+) as cofactor. It depends on Zn(2+) as a cofactor.

Its subcellular location is the cytoplasm. It carries out the reaction RNA(n) + a ribonucleoside 5'-triphosphate = RNA(n+1) + diphosphate. Its function is as follows. DNA-dependent RNA polymerase (RNAP) catalyzes the transcription of DNA into RNA using the four ribonucleoside triphosphates as substrates. Forms the clamp head domain. The chain is DNA-directed RNA polymerase subunit Rpo1N from Methanothermobacter thermautotrophicus (strain ATCC 29096 / DSM 1053 / JCM 10044 / NBRC 100330 / Delta H) (Methanobacterium thermoautotrophicum).